The following is a 152-amino-acid chain: 3-hydroxyacyl-[acyl-carrier-protein] dehydratase FabZ (152 aa).

His58 is a catalytic residue.

Belongs to the thioester dehydratase family. FabZ subfamily.

It localises to the cytoplasm. The enzyme catalyses a (3R)-hydroxyacyl-[ACP] = a (2E)-enoyl-[ACP] + H2O. Functionally, involved in unsaturated fatty acids biosynthesis. Catalyzes the dehydration of short chain beta-hydroxyacyl-ACPs and long chain saturated and unsaturated beta-hydroxyacyl-ACPs. This chain is 3-hydroxyacyl-[acyl-carrier-protein] dehydratase FabZ, found in Prochlorococcus marinus (strain MIT 9312).